The chain runs to 471 residues: Mitochondrial distribution and morphology protein 10 (471 aa).

Residues 313–338 (SNSAATPPRIKNSDSQVLSNNSTDSK) form a disordered region. A compositionally biased stretch (polar residues) spans 325-338 (SDSQVLSNNSTDSK).

It belongs to the MDM10 family. As to quaternary structure, component of the ER-mitochondria encounter structure (ERMES) or MDM complex, composed of MMM1, MDM10, MDM12 and MDM34. Associates with the mitochondrial outer membrane sorting assembly machinery SAM(core) complex.

It localises to the mitochondrion outer membrane. Functionally, component of the ERMES/MDM complex, which serves as a molecular tether to connect the endoplasmic reticulum and mitochondria. Components of this complex are involved in the control of mitochondrial shape and protein biogenesis and may function in phospholipid exchange. MDM10 is involved in the late assembly steps of the general translocase of the mitochondrial outer membrane (TOM complex). Functions in the TOM40-specific route of the assembly of outer membrane beta-barrel proteins, including the association of TOM40 with the receptor TOM22 and small TOM proteins. Can associate with the SAM(core) complex as well as the MDM12-MMM1 complex, both involved in late steps of the major beta-barrel assembly pathway, that is responsible for biogenesis of all outer membrane beta-barrel proteins. May act as a switch that shuttles between both complexes and channels precursor proteins into the TOM40-specific pathway. Plays a role in mitochondrial morphology and in the inheritance of mitochondria. In Debaryomyces hansenii (strain ATCC 36239 / CBS 767 / BCRC 21394 / JCM 1990 / NBRC 0083 / IGC 2968) (Yeast), this protein is Mitochondrial distribution and morphology protein 10.